The chain runs to 249 residues: Cyclin-dependent kinase inhibitor 2 (249 aa).

The tract at residues Lys118 to Ala180 is disordered. Positions Ala161 to Ala180 are enriched in polar residues.

Belongs to the CDI family. ICK/KRP subfamily.

This is Cyclin-dependent kinase inhibitor 2 (KRP2) from Oryza sativa subsp. japonica (Rice).